The chain runs to 348 residues: sn-glycerol-3-phosphate import ATP-binding protein UgpC (348 aa).

An ABC transporter domain is found at 4–235; the sequence is IQLSNIKKQY…PETTFVADFI (232 aa). 37–44 lines the ATP pocket; it reads GPSGCGKS.

Belongs to the ABC transporter superfamily. sn-glycerol-3-phosphate importer (TC 3.A.1.1.3) family. The complex is composed of two ATP-binding proteins (UgpC), two transmembrane proteins (UgpA and UgpE) and a solute-binding protein (UgpB).

The protein resides in the cell inner membrane. It carries out the reaction sn-glycerol 3-phosphate(out) + ATP + H2O = sn-glycerol 3-phosphate(in) + ADP + phosphate + H(+). Functionally, part of the ABC transporter complex UgpBAEC involved in sn-glycerol-3-phosphate (G3P) import. Responsible for energy coupling to the transport system. This chain is sn-glycerol-3-phosphate import ATP-binding protein UgpC, found in Bartonella quintana (strain Toulouse) (Rochalimaea quintana).